Here is a 985-residue protein sequence, read N- to C-terminus: Regulator of telomere elongation helicase 1 homolog (985 aa).

A Helicase ATP-binding domain is found at 7–303; it reads AGIPVHFPFE…QDMGGDEPKD (297 aa). Residue 42 to 49 participates in ATP binding; it reads SPTGTGKT. The [4Fe-4S] cluster site is built by Cys-146, Cys-164, Cys-173, and Cys-209. The DEAH box signature appears at 252 to 255; the sequence is DEAH. The interval 858–884 is disordered; the sequence is GSSGMVKIHKRERSSPTQPESSSQVSK. A compositionally biased stretch (polar residues) spans 872-882; sequence SPTQPESSSQV. A Phosphothreonine modification is found at Thr-874.

It belongs to the helicase family. RAD3/XPD subfamily.

Its subcellular location is the nucleus. It catalyses the reaction ATP + H2O = ADP + phosphate + H(+). In terms of biological role, a probable ATP-dependent DNA helicase implicated in DNA repair and the maintenance of genomic stability. Acts as an anti-recombinase to counteract toxic recombination and limit crossover during meiosis. Regulates meiotic recombination and crossover homeostasis by physically dissociating strand invasion events and thereby promotes noncrossover repair by meiotic synthesis dependent strand annealing (SDSA) as well as disassembly of D loop recombination intermediates. The sequence is that of Regulator of telomere elongation helicase 1 homolog from Drosophila yakuba (Fruit fly).